Consider the following 367-residue polypeptide: DNA replication and repair protein RecF (367 aa).

30-37 (GENAQGKT) contributes to the ATP binding site.

It belongs to the RecF family.

The protein localises to the cytoplasm. Functionally, the RecF protein is involved in DNA metabolism; it is required for DNA replication and normal SOS inducibility. RecF binds preferentially to single-stranded, linear DNA. It also seems to bind ATP. In Chlamydia abortus (strain DSM 27085 / S26/3) (Chlamydophila abortus), this protein is DNA replication and repair protein RecF.